Consider the following 150-residue polypeptide: MKVSRHAKILEIINSKDIDTQEELAEELKKMGMNVTQATVSRDIKELKLIKVLGNTGKYKYATINHTESYMSDKLINIFAQTVINVENIDKLIIIKTISGSAPAAAEAIDTLGFDGVAGTIAGDNTIFVMARTNEKAQEITMKLKKIITA.

The protein belongs to the ArgR family.

It localises to the cytoplasm. It functions in the pathway amino-acid biosynthesis; L-arginine biosynthesis [regulation]. In terms of biological role, regulates arginine biosynthesis genes. In Clostridium botulinum (strain Okra / Type B1), this protein is Arginine repressor.